The sequence spans 335 residues: GTPase Obg (335 aa).

Residues 1–159 (MKFVDSAKIS…IELEMELKLM (159 aa)) form the Obg domain. Residues 160 to 323 (ADVGLVGFPN…LKDELWRQIS (164 aa)) form the OBG-type G domain. Residues 166–173 (GFPNAGKS), 191–195 (FTTLV), 213–216 (DIPG), 280–283 (TKMD), and 304–306 (SSV) each bind GTP. S173 and T193 together coordinate Mg(2+).

The protein belongs to the TRAFAC class OBG-HflX-like GTPase superfamily. OBG GTPase family. As to quaternary structure, monomer. It depends on Mg(2+) as a cofactor.

The protein resides in the cytoplasm. Its function is as follows. An essential GTPase which binds GTP, GDP and possibly (p)ppGpp with moderate affinity, with high nucleotide exchange rates and a fairly low GTP hydrolysis rate. Plays a role in control of the cell cycle, stress response, ribosome biogenesis and in those bacteria that undergo differentiation, in morphogenesis control. This Chlorobaculum parvum (strain DSM 263 / NCIMB 8327) (Chlorobium vibrioforme subsp. thiosulfatophilum) protein is GTPase Obg.